Reading from the N-terminus, the 167-residue chain is Secretion monitor (167 aa).

A signal peptide spans 1-36 (MIGILNRWRQFGRRYFWPHLLLGMVAASFGLPQASA).

The protein belongs to the SecM family.

The protein resides in the cytoplasm. The protein localises to the cytosol. It is found in the periplasm. In terms of biological role, regulates secA expression by translational coupling of the secM secA operon. Translational pausing at a specific Pro residue 5 residues before the end of the protein may allow disruption of a mRNA repressor helix that normally suppresses secA translation initiation. This Erwinia tasmaniensis (strain DSM 17950 / CFBP 7177 / CIP 109463 / NCPPB 4357 / Et1/99) protein is Secretion monitor.